A 628-amino-acid polypeptide reads, in one-letter code: Zinc finger protein 555 (628 aa).

The KRAB domain maps to 4 to 77 (VVFEDVAVDF…ESKIATFTRN (74 aa)). The segment at 172 to 194 (YQCQECGQAYSCRSHLRMHVRTH) adopts a C2H2-type 1; degenerate zinc-finger fold. 14 consecutive C2H2-type zinc fingers follow at residues 200–222 (YVCKLCGKTFPRTSSLNRHVRIH), 228–250 (YECKQCGKAFIDFSSLTSHLRSH), 256–278 (YKCKECGKAFSYSSTFRRHTITH), 284–306 (YKCKECAEAFSYSSTFRRHMISH), 312–334 (HKCKECGEAFSYSSAFRRHMITH), 340–362 (YECKQCGKTFIYLQSFRRHERIH), 368–390 (YECKQCGKTFIYPQSFRRHERTH), 396–418 (YECNQCGKAFSHPSSFRGHMRVH), 424–446 (YECKQCGKTFNWPISLRKHMRTH), 452–474 (YECKQCGKAFSLSACFREHVRMH), 480–502 (YECKLCGKAFYCHISLQKHMRRH), 508–530 (YKCKQCGKAFSWPELLQQHVRTH), 536–558 (YECKECGKVFKWPSSLPIHMRLH), and 564–586 (YQCKHCGKAFNCSSSLRRHVRIH).

The protein belongs to the krueppel C2H2-type zinc-finger protein family.

Its subcellular location is the nucleus. In terms of biological role, may be involved in transcriptional regulation. The protein is Zinc finger protein 555 (ZNF555) of Homo sapiens (Human).